The sequence spans 222 residues: UPF0585 protein CG18661 (222 aa).

The protein belongs to the UPF0585 family.

This is UPF0585 protein CG18661 from Drosophila melanogaster (Fruit fly).